The following is a 349-amino-acid chain: Guanine nucleotide-binding protein alpha-13 subunit (349 aa).

The N-myristoyl glycine moiety is linked to residue glycine 2. Cysteine 3 carries the S-palmitoyl cysteine lipid modification. A G-alpha domain is found at 35–349; sequence SHIRLLLLGS…VFKDIMKRKR (315 aa). Residues 38 to 51 are G1 motif; sequence RLLLLGSAESGKTT. Residues 43–50, 177–183, 202–206, 271–274, and alanine 327 contribute to the GTP site; these read GSAESGKT, IMAYVPT, DIGGQ, and NEID. The G2 motif stretch occupies residues 175 to 183; sequence DLIMAYVPT. Position 183 (threonine 183) interacts with Mg(2+). The tract at residues 198–207 is G3 motif; sequence FQLFDIGGQK. The interval 267–274 is G4 motif; it reads YLFLNEID. Residues 325–330 form a G5 motif region; that stretch reads CIAIDT.

The protein belongs to the G-alpha family. In terms of assembly, g proteins are composed of 3 units; alpha, beta and gamma. The alpha chain contains the guanine nucleotide binding site.

Guanine nucleotide-binding proteins (G proteins) are involved as modulators or transducers in various transmembrane signaling systems. The protein is Guanine nucleotide-binding protein alpha-13 subunit of Caenorhabditis briggsae.